The sequence spans 232 residues: Ribose-5-phosphate isomerase A (232 aa).

Substrate-binding positions include 28–31, 83–86, and 96–99; these read TGST, DGAD, and KGGG. Glu-105 functions as the Proton acceptor in the catalytic mechanism. A substrate-binding site is contributed by Lys-123.

Belongs to the ribose 5-phosphate isomerase family. Homodimer.

The enzyme catalyses aldehydo-D-ribose 5-phosphate = D-ribulose 5-phosphate. It functions in the pathway carbohydrate degradation; pentose phosphate pathway; D-ribose 5-phosphate from D-ribulose 5-phosphate (non-oxidative stage): step 1/1. Catalyzes the reversible conversion of ribose-5-phosphate to ribulose 5-phosphate. The sequence is that of Ribose-5-phosphate isomerase A from Nitrobacter hamburgensis (strain DSM 10229 / NCIMB 13809 / X14).